A 161-amino-acid polypeptide reads, in one-letter code: Pro-corazonin (161 aa).

An N-terminal signal peptide occupies residues 1 to 20 (MMRLLLLPLFLFTLSMACMG). Gln-21 carries the post-translational modification Pyrrolidone carboxylic acid. Position 31 is an asparagine amide (Asn-31). The propeptide occupies 70–161 (LERCLAQLQR…SGEPSVFGKH (92 aa)). Disordered regions lie at residues 93 to 125 (NANRPEPDSSDSGSSRNRANNNNENVLYPTPIQ) and 142 to 161 (VAGSGPTGAGSGEPSVFGKH). Residues 102-117 (SDSGSSRNRANNNNEN) are compositionally biased toward low complexity.

This sequence belongs to the corazonin family.

Its subcellular location is the secreted. Functionally, cardioactive peptide. Corazonin is probably involved in the physiological regulation of the heart beat. Clock (Clk) and cycle (cyc) proteins negatively regulate Crz transcription in a cell-specific manner. This Drosophila pseudoobscura pseudoobscura (Fruit fly) protein is Pro-corazonin.